The sequence spans 649 residues: tRNA-guanine(15) transglycosylase (649 aa).

The active-site Nucleophile is Asp88. Positions 123 and 194 each coordinate substrate. 3 residues coordinate Zn(2+): Cys280, Cys282, and Cys285. The 76-residue stretch at 572–647 (KYRVIVDKSV…VAVNIRGGLK (76 aa)) folds into the PUA domain.

The protein belongs to the archaeosine tRNA-ribosyltransferase family. The cofactor is Zn(2+).

It catalyses the reaction guanosine(15) in tRNA + 7-cyano-7-deazaguanine = 7-cyano-7-carbaguanosine(15) in tRNA + guanine. Its pathway is tRNA modification; archaeosine-tRNA biosynthesis. Exchanges the guanine residue with 7-cyano-7-deazaguanine (preQ0) at position 15 in the dihydrouridine loop (D-loop) of archaeal tRNAs. The sequence is that of tRNA-guanine(15) transglycosylase from Methanococcus vannielii (strain ATCC 35089 / DSM 1224 / JCM 13029 / OCM 148 / SB).